Consider the following 64-residue polypeptide: uncharacterized protein (64 aa).

Residues 1-26 (MVVKENFCGACLTIPLAFAGAGTAIG) form the signal peptide. The chain crosses the membrane as a helical span at residues 33–53 (IKKWSIVITIISLLLTVWFIY).

Belongs to the IIV-6 010R family.

It is found in the host membrane. This is an uncharacterized protein from Aedes vexans (Inland floodwater mosquito).